We begin with the raw amino-acid sequence, 435 residues long: MKTQIEQAREGIITPQMAAVAAEEHVSPEYVCRMVAEGKVVIPWNHVRAPKAVGIGKGLRTKVNASIGTSSDIVDYEAEVRKARAAQESGADTLMELSVGGDLDRVRREVIAAVDLPVGNVPLYQAFCEAARKYGDPNRLDPEMLFDLIERQCADGMAFMAVHCGINLYTIERLRRQGYRYGGLVSKGGVSMVGWMMANGRENPLYEQFDRVVGILKKYDTVLSLGNGLRAGAIHDSSDRAQIQELLINCELAEMGREMGCQMLVEGPGHVPLDEVEGNIQLQKRMSGGAPYYMLGPISTDVAPGFDHITAAIGAAQSSRFGADLICYITPAEHLALPNEEDVRQGVKAARVAAYIGDMNKYPEKGRERDREMSKARRDLDWQRQFELALYPEDARAIRASRTPEDEATCTMCGDFCASRGAGRLFAGDLRGDKV.

Substrate contacts are provided by residues Met-95, Tyr-124, His-163, 186–188, 227–230, and Glu-266; these read SKG and NGLR. Residue His-270 coordinates Zn(2+). Residue Tyr-293 participates in substrate binding. A Zn(2+)-binding site is contributed by His-334. [4Fe-4S] cluster-binding residues include Cys-410, Cys-413, and Cys-417.

The protein belongs to the ThiC family. 5-hydroxybenzimidazole synthase subfamily. In terms of assembly, homodimer. [4Fe-4S] cluster is required as a cofactor.

The catalysed reaction is 5-amino-1-(5-phospho-beta-D-ribosyl)imidazole + AH2 + S-adenosyl-L-methionine = 5-hydroxybenzimidazole + 5'-deoxyadenosine + formate + L-methionine + A + NH4(+) + phosphate + 2 H(+). Its function is as follows. Catalyzes the conversion of aminoimidazole ribotide (AIR) to 5-hydroxybenzimidazole (5-HBI) in a radical S-adenosyl-L-methionine (SAM)-dependent reaction. Is thus involved in the anaerobic biosynthesis of the benzimidazole lower axial ligand of the cobamide produced by G.sulfurreducens. This is 5-hydroxybenzimidazole synthase from Geobacter sulfurreducens (strain ATCC 51573 / DSM 12127 / PCA).